A 258-amino-acid polypeptide reads, in one-letter code: Transcription initiation factor TFIID subunit 9B (258 aa).

The residue at position 1 (Met-1) is an N-acetylmethionine. Ser-147 is modified (phosphoserine). A phosphothreonine mark is found at Thr-159 and Thr-174. Ser-177 bears the Phosphoserine mark. Polar residues predominate over residues 227–236 (SSQSTATDSN). Residues 227 to 258 (SSQSTATDSNPLKRKHDDDDDDDDDDDDNDTM) are disordered. Residues 244–258 (DDDDDDDDDDDNDTM) show a composition bias toward acidic residues.

Belongs to the TAF9 family. In terms of assembly, binds TAF5 and TAF6. Component of TFIID and the TATA-binding protein-free TAF complex (TFTC). TFIID is composed of TATA binding protein (TBP) and a number of TBP-associated factors (TAFs). Binds N-terminal domain of p53/TP53 which is essential for transcription.

Its subcellular location is the nucleus. Essential for cell viability. TAF9 and TAF9L are involved in transcriptional activation as well as repression of distinct but overlapping sets of genes. May have a role in gene regulation associated with apoptosis. TAFs are components of the transcription factor IID (TFIID) complex, the TBP-free TAFII complex (TFTC), the PCAF histone acetylase complex and the STAGA transcription coactivator-HAT complex. TFIID or TFTC are essential for the regulation of RNA polymerase II-mediated transcription. This Rattus norvegicus (Rat) protein is Transcription initiation factor TFIID subunit 9B (Taf9b).